A 510-amino-acid polypeptide reads, in one-letter code: Glycerol kinase (510 aa).

Threonine 12 is a binding site for ADP. Threonine 12, threonine 13, and serine 14 together coordinate ATP. Sn-glycerol 3-phosphate is bound at residue threonine 12. Arginine 16 serves as a coordination point for ADP. Sn-glycerol 3-phosphate-binding residues include arginine 82, glutamate 83, and tyrosine 134. Residues arginine 82, glutamate 83, and tyrosine 134 each contribute to the glycerol site. A Phosphohistidine; by HPr modification is found at histidine 230. Residue aspartate 244 participates in sn-glycerol 3-phosphate binding. Glycerol contacts are provided by aspartate 244 and glutamine 245. ADP-binding residues include threonine 266 and glycine 309. The ATP site is built by threonine 266, glycine 309, glutamine 313, and glycine 410. Residues glycine 410 and asparagine 414 each coordinate ADP.

Belongs to the FGGY kinase family. Homotetramer and homodimer (in equilibrium). In terms of processing, the phosphoenolpyruvate-dependent sugar phosphotransferase system (PTS), including enzyme I, and histidine-containing protein (HPr) are required for the phosphorylation, which leads to the activation of the enzyme.

It carries out the reaction glycerol + ATP = sn-glycerol 3-phosphate + ADP + H(+). Its pathway is polyol metabolism; glycerol degradation via glycerol kinase pathway; sn-glycerol 3-phosphate from glycerol: step 1/1. Activated by phosphorylation and inhibited by fructose 1,6-bisphosphate (FBP). Key enzyme in the regulation of glycerol uptake and metabolism. Catalyzes the phosphorylation of glycerol to yield sn-glycerol 3-phosphate. This Bacillus cereus (strain ATCC 10987 / NRS 248) protein is Glycerol kinase.